Reading from the N-terminus, the 323-residue chain is tRNA-modifying protein YgfZ (323 aa).

Trp29 and Trp182 together coordinate folate.

It belongs to the tRNA-modifying YgfZ family.

Its subcellular location is the cytoplasm. Folate-binding protein involved in regulating the level of ATP-DnaA and in the modification of some tRNAs. It is probably a key factor in regulatory networks that act via tRNA modification, such as initiation of chromosomal replication. The protein is tRNA-modifying protein YgfZ of Vibrio cholerae serotype O1 (strain ATCC 39541 / Classical Ogawa 395 / O395).